A 136-amino-acid chain; its full sequence is MLQPKRTKFRKMHKGRNRGLAQGTDVSFGSFGLKAVGRGRLTARQIEAARRAMTRAVKRQGKIWIRVFPDKPITEKPLAVRMGKGKGNVEYWVALIQPGKVLYEMDGVPEELAREAFKLAAAKLPIKTTFVTKTVM.

It belongs to the universal ribosomal protein uL16 family. As to quaternary structure, part of the 50S ribosomal subunit.

Functionally, binds 23S rRNA and is also seen to make contacts with the A and possibly P site tRNAs. This is Large ribosomal subunit protein uL16 from Citrobacter koseri (strain ATCC BAA-895 / CDC 4225-83 / SGSC4696).